The chain runs to 380 residues: Actinidain (380 aa).

Positions 1 to 24 (MGLPKSFVSMSLLFFSTLLILSLA) are cleaved as a signal peptide. Positions 25-126 (FNAKNLTQRT…NRYEPRVGQV (102 aa)) are cleaved as a propeptide — activation peptide. N-linked (GlcNAc...) asparagine glycans are attached at residues N29, N81, and N111. 3 disulfides stabilise this stretch: C148–C191, C182–C224, and C282–C332. C151 is an active-site residue. Catalysis depends on residues H288 and N308.

The protein belongs to the peptidase C1 family. In terms of tissue distribution, fruit, present in small cells of the outer pericarp of mature fruit, but not large cells.

It catalyses the reaction Specificity close to that of papain.. Its function is as follows. Cysteine protease responsible for the cleavage of kiwellin into kissper and KiTH. This Actinidia deliciosa (Kiwi) protein is Actinidain.